The chain runs to 427 residues: MTNSLLNNGDMVQGVELPDADQQFWWDSLAPILSRMLQCSKYSVQSQANILSFFKDFIVPSYGPRPSIDGEFFWKSYVTYNHTPGQVSFNFHKNKCTVRLSNVPTAPLAGTASDPFNQKGVVQTIKHIQKALPGMDMTIFDYFSEAFLVADEDTVGLDARKPVPQYNQLVVASMLGYDFEPVPRVKVYFNPRWKALQMNIENHDLIWTAINNLGSPIKSYKRTLDLLQECGNPRQPGGWIFQPEFISFDMGENMSNTARLKLYGFTTKTCWSHIESIYTLDRRLDDAETQRGLAVLKRLWHLALSIPEDHDENQDLPPCPHLTAGVIYNYELRENSAKPEAKIYIPVRFYGSGDGKVIEGLVDFFKSEGWDELATSYQRDFVSVFSTPDGKMVGEHHDISFSYKNDHPYVTAYYRPELIRPMERHIV.

77–78 serves as a coordination point for L-tryptophan; sequence YV. Substrate-binding residues include Arg99, Lys186, Tyr188, Arg259, Lys261, Tyr263, Tyr344, Tyr409, and Tyr413.

The protein belongs to the tryptophan dimethylallyltransferase family.

Its pathway is secondary metabolite biosynthesis. Its function is as follows. Indole diterpene prenyltransferase; part of the gene cluster that mediates the biosynthesis of the indole diterpenes penitrems. The geranylgeranyl diphosphate (GGPP) synthase penG catalyzes the first step in penitrem biosynthesis via conversion of farnesyl pyrophosphate and isopentyl pyrophosphate into geranylgeranyl pyrophosphate (GGPP). Condensation of indole-3-glycerol phosphate with GGPP by the prenyl transferase penC then forms 3-geranylgeranylindole (3-GGI). Epoxidation by the FAD-dependent monooxygenase penM leads to a epoxidized-GGI that is substrate of the terpene cyclase penB for cyclization to yield paspaline. Paspaline is subsequently converted to 13-desoxypaxilline by the cytochrome P450 monooxygenase penP, the latter being then converted to paxilline by the cytochrome P450 monooxygenase penQ. Paxilline is converted to beta-paxitriol via C-10 ketoreduction by the short-chain dehydrogenase PC-15 which can be monoprenylated at the C-20 by the indole diterpene prenyltransferase penD. A two-step elimination (acetylation and elimination) process performed by the O-acetyltransferase PC-16 and the P.simplicissimum ptmI-ortholog not yet identified in P.crustosum, leads to the production of the prenylated form of penijanthine. The FAD-linked oxidoreductase ptmO then converts the prenylated form of penijanthine into PC-M5 which is in turn transformed into PC-M4 by the aromatic dimethylallyltransferase PC-22. A series of oxidation steps involving 4 cytochrome P450 monooxygenases (PC-21, PC-05, PC-23, PC-20) and a FAD-dependent monooxygenase (PC-14) are required for the transformation of PC-M4 to penitrems A and E. Synthesis of these final products is proposed to proceed via penitrems D and C (PC-21, PC-05, PC-14) and penitrems B and F (PC-21, PC-05, PC-14, PC-23). The chain is Indole diterpene prenyltransferase penD from Penicillium crustosum (Blue mold fungus).